Consider the following 212-residue polypeptide: Probable chemoreceptor glutamine deamidase CheD (212 aa).

The protein belongs to the CheD family.

The enzyme catalyses L-glutaminyl-[protein] + H2O = L-glutamyl-[protein] + NH4(+). Probably deamidates glutamine residues to glutamate on methyl-accepting chemotaxis receptors (MCPs), playing an important role in chemotaxis. The polypeptide is Probable chemoreceptor glutamine deamidase CheD (Bordetella parapertussis (strain 12822 / ATCC BAA-587 / NCTC 13253)).